The primary structure comprises 316 residues: Ribose-phosphate pyrophosphokinase (316 aa).

ATP is bound by residues 37-39 and 96-97; these read DGE and RQ. Residues H131 and D171 each contribute to the Mg(2+) site. K195 is a catalytic residue. D-ribose 5-phosphate is bound by residues R197, D221, and 225–229; that span reads DTGGT.

This sequence belongs to the ribose-phosphate pyrophosphokinase family. Class I subfamily. In terms of assembly, homohexamer. Mg(2+) serves as cofactor.

Its subcellular location is the cytoplasm. It carries out the reaction D-ribose 5-phosphate + ATP = 5-phospho-alpha-D-ribose 1-diphosphate + AMP + H(+). Its pathway is metabolic intermediate biosynthesis; 5-phospho-alpha-D-ribose 1-diphosphate biosynthesis; 5-phospho-alpha-D-ribose 1-diphosphate from D-ribose 5-phosphate (route I): step 1/1. Functionally, involved in the biosynthesis of the central metabolite phospho-alpha-D-ribosyl-1-pyrophosphate (PRPP) via the transfer of pyrophosphoryl group from ATP to 1-hydroxyl of ribose-5-phosphate (Rib-5-P). The chain is Ribose-phosphate pyrophosphokinase from Haemophilus ducreyi (strain 35000HP / ATCC 700724).